Consider the following 522-residue polypeptide: Lysine--tRNA ligase (522 aa).

A 'HIGH' region motif is present at residues 44-52 (PSGLPHIGT). Residues 290-294 (KISKS) carry the 'KMSKS' region motif. K293 lines the ATP pocket.

It belongs to the class-I aminoacyl-tRNA synthetase family.

Its subcellular location is the cytoplasm. The enzyme catalyses tRNA(Lys) + L-lysine + ATP = L-lysyl-tRNA(Lys) + AMP + diphosphate. The polypeptide is Lysine--tRNA ligase (Rickettsia conorii (strain ATCC VR-613 / Malish 7)).